The sequence spans 141 residues: uncharacterized protein (141 aa).

The HTH marR-type domain maps to R4–K139. The H-T-H motif DNA-binding region spans V53 to E76.

This is an uncharacterized protein from Bacillus subtilis (strain 168).